The sequence spans 138 residues: Basic phospholipase A2 homolog TM-N49 (138 aa).

The N-terminal stretch at 1–16 (MRTLWIMAVLLLGVEG) is a signal peptide. Disulfide bonds link cysteine 42/cysteine 131, cysteine 44/cysteine 60, cysteine 59/cysteine 111, cysteine 65/cysteine 138, cysteine 66/cysteine 104, cysteine 73/cysteine 97, and cysteine 91/cysteine 102.

This sequence belongs to the phospholipase A2 family. Group II subfamily. N49 sub-subfamily. Homodimer; non-covalently linked. As to expression, expressed by the venom gland.

The protein localises to the secreted. In terms of biological role, snake venom phospholipase A2 (PLA2) that exhibits potent myotoxic activity causing inflammatory cell infiltration, severe myoedema, myonecrosis and myolysis in the gastrocnemius muscles of BALB/c mice. This Protobothrops mucrosquamatus (Taiwan habu) protein is Basic phospholipase A2 homolog TM-N49.